Here is a 155-residue protein sequence, read N- to C-terminus: Ribosomal RNA large subunit methyltransferase H (155 aa).

S-adenosyl-L-methionine-binding positions include Leu72, Gly103, and 122–127 (LSPLTL).

This sequence belongs to the RNA methyltransferase RlmH family. As to quaternary structure, homodimer.

Its subcellular location is the cytoplasm. The enzyme catalyses pseudouridine(1915) in 23S rRNA + S-adenosyl-L-methionine = N(3)-methylpseudouridine(1915) in 23S rRNA + S-adenosyl-L-homocysteine + H(+). Its function is as follows. Specifically methylates the pseudouridine at position 1915 (m3Psi1915) in 23S rRNA. The chain is Ribosomal RNA large subunit methyltransferase H from Histophilus somni (strain 2336) (Haemophilus somnus).